The chain runs to 355 residues: Heterogeneous nuclear ribonucleoprotein D0 (355 aa).

A disordered region spans residues 1-91; it reads MSEEQFGGDG…SSPRHTEAAA (91 aa). The residue at position 2 (Ser-2) is an N-acetylserine. Over residues 11-43 the composition is skewed to low complexity; sequence AAAAATAAVGGSAGEQEGAMVAAAAQGPAAAAG. The span at 44–58 shows a compositional bias: gly residues; the sequence is SGSGGGGSAAGGTEG. Basic and acidic residues predominate over residues 64 to 73; the sequence is EGAKIDASKN. The residue at position 71 (Ser-71) is a Phosphoserine. A Glycyl lysine isopeptide (Lys-Gly) (interchain with G-Cter in SUMO2) cross-link involves residue Lys-72. A phosphoserine mark is found at Ser-80, Ser-82, and Ser-83. RRM domains lie at 97 to 179 and 182 to 261; these read WKMF…KTKE and KKIF…MSKE. Lys-119 carries the N6-methyllysine modification. The residue at position 127 (Thr-127) is a Phosphothreonine. Lys-129 is covalently cross-linked (Glycyl lysine isopeptide (Lys-Gly) (interchain with G-Cter in SUMO2)). Lys-165 carries the N6-acetyllysine modification. Ser-190 bears the Phosphoserine mark. A Phosphothreonine modification is found at Thr-193. Residue Lys-197 forms a Glycyl lysine isopeptide (Lys-Gly) (interchain with G-Cter in SUMO2) linkage. 2 positions are modified to N6-acetyllysine: Lys-243 and Lys-251. Glu-261 and Tyr-263 each carry omega-N-methylarginine. Phosphoserine is present on Ser-271. Residues Arg-272, Arg-278, Arg-280, and Arg-282 each carry the omega-N-methylarginine modification. An Asymmetric dimethylarginine; alternate modification is found at Arg-345. At Arg-345 the chain carries Dimethylated arginine; alternate. Arg-345 carries the post-translational modification Omega-N-methylarginine; alternate.

In terms of assembly, identified in a IGF2BP1-dependent mRNP granule complex containing untranslated mRNAs. Part of a complex associated with the FOS mCRD domain and consisting of PABPC1, PAIP1, CSDE1/UNR and SYNCRIP. Interacts with IGF2BP2. Interacts with GTPBP1. Interacts with EIF4G1; the interaction requires RNA. Interacts with EIF3B and RPS3. Methylated by PRMT1, in an insulin-dependent manner. The PRMT1-mediated methylation regulates its phosphorylation. In terms of processing, arg-345 is dimethylated, probably to asymmetric dimethylarginine.

It is found in the nucleus. Its subcellular location is the cytoplasm. Binds with high affinity to RNA molecules that contain AU-rich elements (AREs) found within the 3'-UTR of many proto-oncogenes and cytokine mRNAs. Also binds to double- and single-stranded DNA sequences in a specific manner and functions a transcription factor. Each of the RNA-binding domains specifically can bind solely to a single-stranded non-monotonous 5'-UUAG-3' sequence and also weaker to the single-stranded 5'-TTAGGG-3' telomeric DNA repeat. Binds RNA oligonucleotides with 5'-UUAGGG-3' repeats more tightly than the telomeric single-stranded DNA 5'-TTAGGG-3' repeats. Binding of RRM1 to DNA inhibits the formation of DNA quadruplex structure which may play a role in telomere elongation. May be involved in translationally coupled mRNA turnover. Implicated with other RNA-binding proteins in the cytoplasmic deadenylation/translational and decay interplay of the FOS mRNA mediated by the major coding-region determinant of instability (mCRD) domain. May play a role in the regulation of the rhythmic expression of circadian clock core genes. Directly binds to the 3'UTR of CRY1 mRNA and induces CRY1 rhythmic translation. May also be involved in the regulation of PER2 translation. This is Heterogeneous nuclear ribonucleoprotein D0 (Hnrnpd) from Mus musculus (Mouse).